A 535-amino-acid polypeptide reads, in one-letter code: Methylmalonate-semialdehyde/malonate-semialdehyde dehydrogenase [acylating], mitochondrial (535 aa).

The N-terminal 32 residues, 1 to 32 (MAAAVAAAAAMRSRILQVSSKVNATWYPASSF), are a transit peptide targeting the mitochondrion. 4 positions are modified to N6-acetyllysine; alternate: lysine 47, lysine 52, lysine 55, and lysine 76. Residues lysine 47, lysine 52, lysine 55, and lysine 76 each carry the N6-succinyllysine; alternate modification. Position 87 is an N6-acetyllysine (lysine 87). An N6-acetyllysine; alternate mark is found at lysine 117 and lysine 129. Lysine 117 and lysine 129 each carry N6-succinyllysine; alternate. NAD(+) contacts are provided by alanine 183, phenylalanine 185, lysine 209, glutamate 212, arginine 213, and serine 262. Serine 262 is modified (phosphoserine). Lysine 298 is subject to N6-acetyllysine. Cysteine 317 acts as the Nucleophile in catalysis. N6-acetyllysine is present on residues lysine 330 and lysine 331. Residues lysine 364 and lysine 376 each carry the N6-acetyllysine; alternate modification. N6-succinyllysine; alternate is present on residues lysine 364 and lysine 376. Serine 380 is subject to Phosphoserine. At lysine 391 the chain carries N6-succinyllysine. Glutamate 417 serves as a coordination point for NAD(+). Lysine 500 bears the N6-acetyllysine mark. Lysine 517 is modified (N6-succinyllysine).

The protein belongs to the aldehyde dehydrogenase family. Homotetramer. In terms of processing, acetylation of Lys-55; Lys-117 and Lys-331 is observed in liver mitochondria from fasted mice but not from fed mice.

Its subcellular location is the mitochondrion. The catalysed reaction is 3-oxopropanoate + NAD(+) + CoA + H2O = hydrogencarbonate + acetyl-CoA + NADH + H(+). It carries out the reaction 2-methyl-3-oxopropanoate + NAD(+) + CoA + H2O = propanoyl-CoA + hydrogencarbonate + NADH + H(+). It catalyses the reaction (R)-2-methyl-3-oxopropanoate + NAD(+) + CoA + H2O = propanoyl-CoA + hydrogencarbonate + NADH + H(+). The enzyme catalyses (S)-2-methyl-3-oxopropanoate + NAD(+) + CoA + H2O = propanoyl-CoA + hydrogencarbonate + NADH + H(+). Its function is as follows. Malonate and methylmalonate semialdehyde dehydrogenase involved in the catabolism of valine, thymine, and compounds catabolized by way of beta-alanine, including uracil and cytidine. This Mus musculus (Mouse) protein is Methylmalonate-semialdehyde/malonate-semialdehyde dehydrogenase [acylating], mitochondrial.